The sequence spans 165 residues: Protein YELLOW LEAF 1, choloroplastic (165 aa).

A chloroplast-targeting transit peptide spans 1–51 (MPPLATMSSPGSLLLLTPAVYQGIGRNRGGQSQEGQSISSSRSLKTKLSVS). The segment at 71–118 (TQTARRKSFSGPTSPPSGSVKEKVRSPKLDDGGTGFPPFRFGGGGGGG) is disordered. Over residues 79–89 (FSGPTSPPSGS) the composition is skewed to low complexity. Residues 90 to 101 (VKEKVRSPKLDD) are compositionally biased toward basic and acidic residues.

Interacts with atpB. As to expression, highly expressed in leaves. Expressed in leaf sheaths. Expressed at low levels in stems.

Its subcellular location is the plastid. The protein localises to the chloroplast. Required for photosynthetic protein complex assembly in chloroplast thylakoid membranes during leaf development. Maintains the abundance of the core protein complex PsaA-PsaB of photosystem I (PSI) in the thylakoid membrane. May play a role in the efficient biogenesis of the chloroplast ATP synthase complex, possibly by interacting with the beta subunit atpB. The sequence is that of Protein YELLOW LEAF 1, choloroplastic from Oryza sativa subsp. japonica (Rice).